A 114-amino-acid polypeptide reads, in one-letter code: MICOS complex subunit MIC12 (114 aa).

Residues 4–26 form a helical membrane-spanning segment; that stretch reads IAKLGSFTLVSGVVATSCYYYFI.

This sequence belongs to the MICOS complex subunit Mic12 family. Component of the mitochondrial contact site and cristae organizing system (MICOS) complex.

The protein localises to the mitochondrion inner membrane. In terms of biological role, component of the MICOS complex, a large protein complex of the mitochondrial inner membrane that plays crucial roles in the maintenance of crista junctions, inner membrane architecture, and formation of contact sites to the outer membrane. This is MICOS complex subunit MIC12 (AIM5) from Candida glabrata (strain ATCC 2001 / BCRC 20586 / JCM 3761 / NBRC 0622 / NRRL Y-65 / CBS 138) (Yeast).